We begin with the raw amino-acid sequence, 181 residues long: Inner membrane-spanning protein YciB (181 aa).

Helical transmembrane passes span 10 to 30, 50 to 70, 80 to 100, 120 to 140, and 148 to 168; these read LIIFFALYKFYDIYVATGALI, MQLITFVMVALFGGMTLALHD, IVYVVFALGLTISQIMGKPAI, WAWVMFFSGCAALNLYVAYHL, and FKVFGLLAATFVFTLLTGGYI.

This sequence belongs to the YciB family.

Its subcellular location is the cell inner membrane. Plays a role in cell envelope biogenesis, maintenance of cell envelope integrity and membrane homeostasis. The chain is Inner membrane-spanning protein YciB from Vibrio cholerae serotype O1 (strain ATCC 39541 / Classical Ogawa 395 / O395).